Consider the following 79-residue polypeptide: Cytochrome b (79 aa).

3 consecutive transmembrane segments (helical) span residues 1-7 (SALFLAM), 31-52 (WLIRYIHANGASLFFICLYLHI), and 67-79 (WNIGIILLILTMA). Residues His37 and His51 each contribute to the heme b site.

Belongs to the cytochrome b family. In terms of assembly, the cytochrome bc1 complex contains 11 subunits: 3 respiratory subunits (MT-CYB, CYC1 and UQCRFS1), 2 core proteins (UQCRC1 and UQCRC2) and 6 low-molecular weight proteins (UQCRH/QCR6, UQCRB/QCR7, UQCRQ/QCR8, UQCR10/QCR9, UQCR11/QCR10 and a cleavage product of UQCRFS1). This cytochrome bc1 complex then forms a dimer. It depends on heme b as a cofactor.

It is found in the mitochondrion inner membrane. In terms of biological role, component of the ubiquinol-cytochrome c reductase complex (complex III or cytochrome b-c1 complex) that is part of the mitochondrial respiratory chain. The b-c1 complex mediates electron transfer from ubiquinol to cytochrome c. Contributes to the generation of a proton gradient across the mitochondrial membrane that is then used for ATP synthesis. This Dipodomys heermanni (Heermann's kangaroo rat) protein is Cytochrome b (MT-CYB).